The chain runs to 329 residues: NADH-quinone oxidoreductase subunit H (329 aa).

9 consecutive transmembrane segments (helical) span residues 9 to 29 (LIKI…ATYI), 42 to 62 (GPCY…IKLF), 75 to 95 (FIFT…MAPI), 117 to 137 (IGFL…ILAG), 154 to 174 (IQLL…LMVV), 188 to 208 (GGFL…FLIA), 238 to 258 (LKWG…SFVI), 269 to 291 (WGFI…LSMW), and 309 to 329 (WKIM…IILI).

This sequence belongs to the complex I subunit 1 family. In terms of assembly, NDH-1 is composed of 14 different subunits. Subunits NuoA, H, J, K, L, M, N constitute the membrane sector of the complex.

It is found in the cell inner membrane. It carries out the reaction a quinone + NADH + 5 H(+)(in) = a quinol + NAD(+) + 4 H(+)(out). In terms of biological role, NDH-1 shuttles electrons from NADH, via FMN and iron-sulfur (Fe-S) centers, to quinones in the respiratory chain. The immediate electron acceptor for the enzyme in this species is believed to be ubiquinone. Couples the redox reaction to proton translocation (for every two electrons transferred, four hydrogen ions are translocated across the cytoplasmic membrane), and thus conserves the redox energy in a proton gradient. This subunit may bind ubiquinone. In Helicobacter pylori (strain P12), this protein is NADH-quinone oxidoreductase subunit H.